Reading from the N-terminus, the 1150-residue chain is Alpha-mannosidase 2 (1150 aa).

Residues 1 to 5 are Cytoplasmic-facing; sequence MKLSR. A helical; Signal-anchor for type II membrane protein transmembrane segment spans residues 6–26; that stretch reads QFTVFGSAIFCVVIFSLYLML. At 27–1150 the chain is on the lumenal side; that stretch reads DRGHLDYPRG…STFRIRLRWT (1124 aa). A glycan (N-linked (GlcNAc...) asparagine) is linked at N78. Phosphoserine is present on residues S80 and S82. N-linked (GlcNAc...) asparagine glycosylation is present at N93. Positions 174, 176, 288, and 568 each coordinate Zn(2+). The Nucleophile role is filled by D288. N1129 carries an N-linked (GlcNAc...) asparagine glycan.

The protein belongs to the glycosyl hydrolase 38 family. Homodimer; disulfide-linked. Zn(2+) serves as cofactor. In terms of processing, glycosylated. In terms of tissue distribution, all tissues, mostly in adrenal and thymus.

It localises to the golgi apparatus membrane. It catalyses the reaction N(4)-{beta-D-GlcNAc-(1-&gt;2)-alpha-D-Man-(1-&gt;3)-[alpha-D-Man-(1-&gt;3)-[alpha-D-Man-(1-&gt;6)]-alpha-D-Man-(1-&gt;6)]-beta-D-Man-(1-&gt;4)-beta-D-GlcNAc-(1-&gt;4)-beta-D-GlcNAc}-L-asparaginyl-[protein] + 2 H2O = 2 alpha-D-mannopyranose + an N(4)-{beta-D-GlcNAc-(1-&gt;2)-alpha-D-Man-(1-&gt;3)-[alpha-D-Man-(1-&gt;6)]-beta-D-Man-(1-&gt;4)-beta-D-GlcNAc-(1-&gt;4)-beta-D-GlcNAc}-L-asparaginyl-[protein]. The protein operates within protein modification; protein glycosylation. Catalyzes the first committed step in the biosynthesis of complex N-glycans. It controls conversion of high mannose to complex N-glycans; the final hydrolytic step in the N-glycan maturation pathway. The protein is Alpha-mannosidase 2 (Man2a1) of Mus musculus (Mouse).